A 291-amino-acid polypeptide reads, in one-letter code: 33 kDa chaperonin (291 aa).

2 cysteine pairs are disulfide-bonded: Cys-235/Cys-237 and Cys-268/Cys-271.

This sequence belongs to the HSP33 family. Under oxidizing conditions two disulfide bonds are formed involving the reactive cysteines. Under reducing conditions zinc is bound to the reactive cysteines and the protein is inactive.

Its subcellular location is the cytoplasm. Its function is as follows. Redox regulated molecular chaperone. Protects both thermally unfolding and oxidatively damaged proteins from irreversible aggregation. Plays an important role in the bacterial defense system toward oxidative stress. The protein is 33 kDa chaperonin of Bacillus subtilis (strain 168).